Here is a 293-residue protein sequence, read N- to C-terminus: Acetylglutamate kinase (293 aa).

Substrate is bound by residues 70-71, R92, and N186; that span reads GG.

Belongs to the acetylglutamate kinase family. ArgB subfamily.

It localises to the cytoplasm. It catalyses the reaction N-acetyl-L-glutamate + ATP = N-acetyl-L-glutamyl 5-phosphate + ADP. The protein operates within amino-acid biosynthesis; L-arginine biosynthesis; N(2)-acetyl-L-ornithine from L-glutamate: step 2/4. Functionally, catalyzes the ATP-dependent phosphorylation of N-acetyl-L-glutamate. This is Acetylglutamate kinase from Synechococcus sp. (strain CC9605).